The primary structure comprises 746 residues: MGQTGKKSEKGPVCWRKRVKSEYMRLRQLKRFRRADEVKSMFSSNRQKILERTEILNQEWKQRRIQPVHILTSVSSLRGTRECSVTSDLDFPTQVIPLKTLNAVASVPIMYSWSPLQQNFMVEDETVLHNIPYMGDEVLDQDGTFIEELIKNYDGKVHGDRECGFINDEIFVELVNALGQYNDDDDDDDGDDPEEREEKQKDLEDHRDDKESRPPRKFPSDKIFEAISSMFPDKGTAEELKEKYKELTEQQLPGALPPECTPNIDGPNAKSVQREQSLHSFHTLFCRRCFKYDCFLHPFHATPNTYKRKNTETALDNKPCGPQCYQHLEGAKEFAAALTAERIKTPPKRPGGRRRGRLPNNSSRPSTPTINVLESKDTDSDREAGTETGGENNDKEEEEKKDETSSSSEANSRCQTPIKMKPNIEPPENVEWSGAEASMFRVLIGTYYDNFCAIARLIGTKTCRQVYEFRVKESSIIAPAPAEDVDTPPRKKKRKHRLWAAHCRKIQLKKDGSSNHVYNYQPCDHPRQPCDSSCPCVIAQNFCEKFCQCSSECQNRFPGCRCKAQCNTKQCPCYLAVRECDPDLCLTCGAADHWDSKNVSCKNCSIQRGSKKHLLLAPSDVAGWGIFIKDPVQKNEFISEYCGEIISQDEADRRGKVYDKYMCSFLFNLNNDFVVDATRKGNKIRFANHSVNPNCYAKVMMVNGDHRIGIFAKRAIQTGEELFFDYRYSQADALKYVGIEREMEIP.

The interval 1–340 (MGQTGKKSEK…AKEFAAALTA (340 aa)) is interaction with DNMT1, DNMT3A and DNMT3B. Position 21 is a phosphoserine; by PKB/AKT1 (serine 21). Positions 39–68 (KSMFSSNRQKILERTEILNQEWKQRRIQPV) are interaction with EED. Serine 75 carries O-linked (GlcNAc) serine glycosylation. Serine 76 is subject to Phosphoserine. Residues 180–222 (QYNDDDDDDDGDDPEEREEKQKDLEDHRDDKESRPPRKFPSDK) form a disordered region. Over residues 182-195 (NDDDDDDDGDDPEE) the composition is skewed to acidic residues. A compositionally biased stretch (basic and acidic residues) spans 196–222 (REEKQKDLEDHRDDKESRPPRKFPSDK). An interaction with CDYL region spans residues 329–522 (EGAKEFAAAL…SSNHVYNYQP (194 aa)). Phosphothreonine is present on threonine 339. The segment at 340-426 (AERIKTPPKR…PIKMKPNIEP (87 aa)) is disordered. At threonine 345 the chain carries Phosphothreonine; by CDK1 and CDK2. Positions 345 to 357 (TPPKRPGGRRRGR) are enriched in basic residues. A phosphoserine mark is found at serine 363 and serine 366. The residue at position 367 (threonine 367) is a Phosphothreonine. Over residues 374-385 (ESKDTDSDREAG) the composition is skewed to basic and acidic residues. At threonine 487 the chain carries Phosphothreonine. The 103-residue stretch at 503–605 (CRKIQLKKDG…SKNVSCKNCS (103 aa)) folds into the CXC domain. Positions 612 to 727 (KHLLLAPSDV…TGEELFFDYR (116 aa)) constitute an SET domain. A Glycyl lysine isopeptide (Lys-Gly) (interchain with G-Cter in SUMO2) cross-link involves residue lysine 634.

The protein belongs to the class V-like SAM-binding methyltransferase superfamily. Histone-lysine methyltransferase family. EZ subfamily. Component of the PRC2/EED-EZH2 complex, which includes EED, EZH2, SUZ12, RBBP4 and RBBP7 and possibly AEBP2. The minimum components required for methyltransferase activity of the PRC2/EED-EZH2 complex are EED, EZH2 and SUZ12. The PRC2 complex may also interact with DNMT1, DNMT3A, DNMT3B and PHF1 via the EZH2 subunit and with SIRT1 via the SUZ12 subunit. Interacts with HDAC1 and HDAC2. Binds ATRX via the SET domain. Interacts with PRAME. Interacts with CDYL. Interacts with CLOCK, BMAL1 and CRY1. Interacts with DNMT3L; the interaction is direct. Interacts with EZHIP; the interaction blocks EZH2 methyltransferase activity. Interacts with ZNF263; recruited to the SIX3 promoter along with other proteins involved in chromatin modification and transcriptional corepression where it contributes to transcriptional repression. Interacts with ARMC12. Interacts with ZMYND8; the interaction is dependent on the presence of chromatin. Interacts with DDX18; this interaction inhibits the PRC2 complex. Post-translationally, phosphorylated by AKT1. Phosphorylation by AKT1 reduces methyltransferase activity. Phosphorylation at Thr-345 by CDK1 and CDK2 promotes maintenance of H3K27me3 levels at EZH2-target loci, thus leading to epigenetic gene silencing. In terms of processing, sumoylated. Glycosylated: O-GlcNAcylation at Ser-75 by OGT increases stability of EZH2 and facilitates the formation of H3K27me3 by the PRC2/EED-EZH2 complex. In terms of tissue distribution, in the ovary, expressed in primordial follicles and oocytes and also in external follicle cells (at protein level). Expressed in many tissues. Overexpressed in numerous tumor types including carcinomas of the breast, colon, larynx, lymphoma and testis.

It is found in the nucleus. The catalysed reaction is L-lysyl(27)-[histone H3] + 3 S-adenosyl-L-methionine = N(6),N(6),N(6)-trimethyl-L-lysyl(27)-[histone H3] + 3 S-adenosyl-L-homocysteine + 3 H(+). In terms of biological role, polycomb group (PcG) protein. Catalytic subunit of the PRC2/EED-EZH2 complex, which methylates 'Lys-9' (H3K9me) and 'Lys-27' (H3K27me) of histone H3, leading to transcriptional repression of the affected target gene. Able to mono-, di- and trimethylate 'Lys-27' of histone H3 to form H3K27me1, H3K27me2 and H3K27me3, respectively. Displays a preference for substrates with less methylation, loses activity when progressively more methyl groups are incorporated into H3K27, H3K27me0 &gt; H3K27me1 &gt; H3K27me2. Compared to EZH1-containing complexes, it is more abundant in embryonic stem cells and plays a major role in forming H3K27me3, which is required for embryonic stem cell identity and proper differentiation. The PRC2/EED-EZH2 complex may also serve as a recruiting platform for DNA methyltransferases, thereby linking two epigenetic repression systems. Genes repressed by the PRC2/EED-EZH2 complex include HOXC8, HOXA9, MYT1, CDKN2A and retinoic acid target genes. EZH2 can also methylate non-histone proteins such as the transcription factor GATA4 and the nuclear receptor RORA. Regulates the circadian clock via histone methylation at the promoter of the circadian genes. Essential for the CRY1/2-mediated repression of the transcriptional activation of PER1/2 by the CLOCK-BMAL1 heterodimer; involved in the di and trimethylation of 'Lys-27' of histone H3 on PER1/2 promoters which is necessary for the CRY1/2 proteins to inhibit transcription. The chain is Histone-lysine N-methyltransferase EZH2 from Homo sapiens (Human).